Reading from the N-terminus, the 261-residue chain is UPF0328 protein ECU06_0100 (261 aa).

The protein belongs to the UPF0328 family.

The polypeptide is UPF0328 protein ECU06_0100 (Encephalitozoon cuniculi (strain GB-M1) (Microsporidian parasite)).